The following is a 317-amino-acid chain: METWQEVTVHVHRDAQEAVSYVLIETGSQGVAIADSADYIGQKDRFGELYPDVEQSDMIAITAYYPSSTNLADVIATINEQLAELASFGLQVGQVTVDSQELAEEDWADNWKKYYEPARITHDLTIVPSWTAYDASAGEKVIKLDPGMAFGTGTHPTTKMSLFALEQILRGGETVIDVGTGSGVLSIASSLLGAKTIYAYDLDDVAVRVAQENIDLNQGTDNIHVAAGDLLKGVSQEADVIVANILADILVLLTDDAYRLVKKEGYLILSGIISEKLDMVLEAAFSAGFFLETHMVQGEWNALVFKKTDDISGVIGG.

The S-adenosyl-L-methionine site is built by threonine 158, glycine 179, aspartate 201, and asparagine 244.

It belongs to the methyltransferase superfamily. PrmA family.

It localises to the cytoplasm. It catalyses the reaction L-lysyl-[protein] + 3 S-adenosyl-L-methionine = N(6),N(6),N(6)-trimethyl-L-lysyl-[protein] + 3 S-adenosyl-L-homocysteine + 3 H(+). Functionally, methylates ribosomal protein L11. The chain is Ribosomal protein L11 methyltransferase from Streptococcus pyogenes serotype M6 (strain ATCC BAA-946 / MGAS10394).